The following is a 339-amino-acid chain: NADP-dependent dehydrogenase M3 (339 aa).

NADP(+)-binding residues include Ser-49, Ile-51, Asp-93, Tyr-206, Lys-210, Ile-240, and Gln-244. Tyr-206 acts as the Proton acceptor in catalysis. The Lowers pKa of active site Tyr role is filled by Lys-210.

This sequence belongs to the short-chain dehydrogenases/reductases (SDR) family. In terms of assembly, homodimer.

The protein localises to the cytoplasm. Its subcellular location is the cytosol. Its pathway is secondary metabolite biosynthesis. In terms of biological role, NADP-dependent dehydrogenase; part of the gene cluster that mediates the biosynthesis of squalestatin S1 (SQS1, also known as zaragozic acid A), a heavily oxidized fungal polyketide that offers potent cholesterol lowering activity by targeting squalene synthase (SS). SQS1 is composed of a 2,8-dioxobicyclic[3.2.1]octane-3,4,5-tricarboxyclic acid core that is connected to two lipophilic polyketide arms. These initial steps feature the priming of an unusual benzoic acid starter unit onto the highly reducing polyketide synthase pks2, followed by oxaloacetate extension and product release to generate a tricarboxylic acid containing product. The phenylalanine ammonia lyase (PAL) M7 and the acyl-CoA ligase M9 are involved in transforming phenylalanine into benzoyl-CoA. The citrate synthase-like protein R3 is involved in connecting the C-alpha-carbons of the hexaketide chain and oxaloacetate to afford the tricarboxylic acid unit. The potential hydrolytic enzymes, M8 and M10, are in close proximity to pks2 and may participate in product release. On the other side, the tetraketide arm is synthesized by a the squalestatin tetraketide synthase pks1 and enzymatically esterified to the core in the last biosynthetic step, by the acetyltransferase M4. The biosynthesis of the tetraketide must involve 3 rounds of chain extension. After the first and second rounds methyl-transfer occurs, and in all rounds of extension the ketoreductase and dehydratase are active. The enoyl reductase and C-MeT of pks1 are not active in the final round of extension. The acetyltransferase M4 appears to have a broad substrate selectivity for its acyl CoA substrate, allowing the in vitro synthesis of novel squalestatins. The biosynthesis of SQS1 requires several oxidative steps likely performed by oxidoreductases M1, R1 and R2. Finally, in support of the identification of the cluster as being responsible for SQS1 production, the cluster contains a gene encoding a putative squalene synthase (SS) R6, suggesting a likely mechanism for self-resistance. This is NADP-dependent dehydrogenase M3 from Phoma sp. (strain ATCC 20986 / MF5453).